A 205-amino-acid polypeptide reads, in one-letter code: Small ribosomal subunit protein uS4 (205 aa).

Residues 19–45 are disordered; that stretch reads IWGRPKSPVNRREYGPGQHGQRRKGKL. In terms of domain architecture, S4 RNA-binding spans 94 to 157; sequence SRLDAVVYRA…KQLVIVLEAV (64 aa).

This sequence belongs to the universal ribosomal protein uS4 family. In terms of assembly, part of the 30S ribosomal subunit. Contacts protein S5. The interaction surface between S4 and S5 is involved in control of translational fidelity.

One of the primary rRNA binding proteins, it binds directly to 16S rRNA where it nucleates assembly of the body of the 30S subunit. Its function is as follows. With S5 and S12 plays an important role in translational accuracy. The sequence is that of Small ribosomal subunit protein uS4 from Brucella anthropi (strain ATCC 49188 / DSM 6882 / CCUG 24695 / JCM 21032 / LMG 3331 / NBRC 15819 / NCTC 12168 / Alc 37) (Ochrobactrum anthropi).